Here is a 342-residue protein sequence, read N- to C-terminus: Serpentine receptor class r-10 (342 aa).

The Extracellular segment spans residues methionine 1–aspartate 11. The chain crosses the membrane as a helical span at residues threonine 12–leucine 32. Residues lysine 33–asparagine 38 are Cytoplasmic-facing. Residues leucine 39 to isoleucine 59 form a helical membrane-spanning segment. Over glutamate 60 to asparagine 92 the chain is Extracellular. N-linked (GlcNAc...) asparagine glycans are attached at residues asparagine 71 and asparagine 83. A helical transmembrane segment spans residues serine 93–tyrosine 113. At arginine 114–tyrosine 131 the chain is on the cytoplasmic side. A helical transmembrane segment spans residues leucine 132–phenylalanine 152. Topologically, residues leucine 153–asparagine 202 are extracellular. Asparagine 179 carries an N-linked (GlcNAc...) asparagine glycan. Residues leucine 203–cysteine 223 traverse the membrane as a helical segment. At glycine 224–leucine 257 the chain is on the cytoplasmic side. The helical transmembrane segment at isoleucine 258–isoleucine 278 threads the bilayer. The Extracellular segment spans residues asparagine 279 to asparagine 285. A helical membrane pass occupies residues phenylalanine 286 to isoleucine 306. Topologically, residues arginine 307–histidine 342 are cytoplasmic.

The protein belongs to the nematode receptor-like protein str family. In terms of assembly, interacts with odr-4.

It is found in the cell projection. The protein resides in the cilium membrane. An odorant receptor which affects chemotaxis to the volatile odorant diacetyl. Specifies AWA neuronal cell fate via the odr-7 pathway. This chain is Serpentine receptor class r-10, found in Caenorhabditis briggsae.